Reading from the N-terminus, the 212-residue chain is Ribosome maturation factor RimM (212 aa).

One can recognise a PRC barrel domain in the interval 105–181 (EEEFYYADLI…IDSITAGLDN (77 aa)). The interval 181–212 (NAELSGEEDEAEGPESARGSRPRGPKSAGEPR) is disordered.

Belongs to the RimM family. As to quaternary structure, binds ribosomal protein uS19.

It localises to the cytoplasm. An accessory protein needed during the final step in the assembly of 30S ribosomal subunit, possibly for assembly of the head region. Essential for efficient processing of 16S rRNA. May be needed both before and after RbfA during the maturation of 16S rRNA. It has affinity for free ribosomal 30S subunits but not for 70S ribosomes. The chain is Ribosome maturation factor RimM from Chelativorans sp. (strain BNC1).